We begin with the raw amino-acid sequence, 548 residues long: Frizzled-7-B (548 aa).

The first 18 residues, 1–18, serve as a signal peptide directing secretion; that stretch reads MLAPVSLLFCLFLQLCPS. Topologically, residues 19–230 are extracellular; that stretch reads AQQYHGEKGI…EEEVRFARLW (212 aa). Residues 31 to 150 form the FZ domain; that stretch reads PDHGFCQPIS…HGAGEICVGQ (120 aa). 5 disulfides stabilise this stretch: Cys-36/Cys-97, Cys-44/Cys-90, Cys-81/Cys-118, Cys-107/Cys-147, and Cys-111/Cys-135. N-linked (GlcNAc...) asparagine glycosylation is present at Asn-50. N-linked (GlcNAc...) asparagine glycosylation is present at Asn-151. The chain crosses the membrane as a helical span at residues 231–251; it reads VGIWAILCGISTLFTVLTYLV. Over 252–262 the chain is Cytoplasmic; sequence DMRRFSYPERP. A helical transmembrane segment spans residues 263–283; it reads IIFLSGCYFMVAVAYTAGFLL. Topologically, residues 284-311 are extracellular; the sequence is EERAVCVERFSEDSYRTVAQGTKKEGCT. Residues 312-332 form a helical membrane-spanning segment; the sequence is ILFMILYFFGMASSIWWVILA. Topologically, residues 333–353 are cytoplasmic; that stretch reads LTWFLSAGMKWGHEAIEANSQ. Residues 354-374 traverse the membrane as a helical segment; that stretch reads YFHLAAWAVPAVKTITILAMG. The Extracellular portion of the chain corresponds to 375-397; that stretch reads QVDGDVLSGVCYVGINSVDSLRG. A helical transmembrane segment spans residues 398-418; the sequence is FVLAPLFVYLFLGTSFLLAGF. Residues 419-444 are Cytoplasmic-facing; it reads VSLFRIRTIMKHDGTKTEKLEKLMVR. The helical transmembrane segment at 445–465 threads the bilayer; that stretch reads IGVFSVMYTVPATIVLACYFY. At 466-502 the chain is on the extracellular side; the sequence is EQAFRDTWEKTWLVHTCKGYAVPCPNYNFAPMSPDFT. The chain crosses the membrane as a helical span at residues 503-523; that stretch reads VFMIKYLMTMIVGITSSFWIW. The Cytoplasmic portion of the chain corresponds to 524-548; the sequence is SGKTLQSWRRFYHRLGNGSKGETAV. Positions 526 to 531 match the Lys-Thr-X-X-X-Trp motif, mediates interaction with the PDZ domain of Dvl family members motif; sequence KTLQSW. A PDZ-binding motif is present at residues 546–548; sequence TAV.

This sequence belongs to the G-protein coupled receptor Fz/Smo family. As to quaternary structure, interacts with wnt11 and sdc4. The extracellular domain interacts with the extracellular domain of pcdh8/papc. Interacts (via C-terminus) with dvl1 (via PDZ domain). During gastrulation, broadly expressed on the dorsal side of the embryo in deep mesodermal cells surrounding the blastopore lip and in presumptive anterior neuroectoderm. During neurulation, localized to the cranial neural crest and heart field where expression is retained at later stages in addition to new areas of expression in the neural tube, pronephros and tailbud. At tailbud stage, expressed in the pronephric duct, and broad head expression becomes more restricted to the hindbrain. In tadpoles, strongly expressed in the eye and the pericardium and myocardium of the developing heart.

Its subcellular location is the cell membrane. The protein localises to the endosome membrane. Functionally, receptor for Wnt proteins. Acts in both canonical and non-canonical Wnt pathways. Although different papers report differing Wnt preferences, wnt5a, wnt8b and wnt11 have been proposed as synergists. In the canonical Wnt pathway, acts via beta-catenin to promote the expression of the dorsal genes siamois, twin and nodal3 and to establish the dorsal axis of the embryo and induce dorsal mesoderm formation. In a non-canonical Wnt/planar cell polarity (PCP) pathway, acts with sdc4 and dvl2/dsh to regulate convergent extension cell movements during gastrulation. Triggers phosphorylation of dvl2/dsh and its translocation to the plasma membrane. In a third branch of Wnt signaling, acts in a non-canonical pathway via trimeric G proteins, and independently of dvl2/dsh, to recruit protein kinase C (PKC) to the membrane and thus activate PKC. PKC signaling controls cell sorting and tissue separation during gastrulation. This Xenopus laevis (African clawed frog) protein is Frizzled-7-B (fzd7-b).